The following is a 281-amino-acid chain: Very long chain fatty acid elongase 7 (281 aa).

Alanine 2 carries the post-translational modification N-acetylalanine. At 2 to 27 (AFSDLTSRTVHLYDNWIKDADPRVED) the chain is on the lumenal side. Residues 28 to 48 (WLLMSSPLPQTILLGFYVYFV) form a helical membrane-spanning segment. Residues 49–72 (TSLGPKLMENRKPFELKKAMITYN) are Cytoplasmic-facing. The helical transmembrane segment at 73-93 (FFIVLFSVYMCYEFVMSGWGI) threads the bilayer. Residues 94–115 (GYSFRCDIVDYSRSPTALRMAR) lie on the Lumenal side of the membrane. A disulfide bond links cysteine 99 and cysteine 231. Residues 116–136 (TCWLYYFSKFIELLDTIFFVL) form a helical membrane-spanning segment. Lysine 124, arginine 137, lysine 139, glutamine 142, and histidine 147 together coordinate 3-oxoeicosanoyl-CoA. Residues 137 to 142 (RKKNSQ) are Cytoplasmic-facing. Residues 143 to 162 (VTFLHVFHHTIMPWTWWFGV) traverse the membrane as a helical segment. A HxxHH motif motif is present at residues 147–151 (HVFHH). The active-site Nucleophile is histidine 150. Residues 163–171 (KFAAGGLGT) lie on the Lumenal side of the membrane. The helical transmembrane segment at 172 to 194 (FHALLNTAVHVVMYSYYGLSALG) threads the bilayer. Positions 187, 204, 208, and 211 each coordinate 3-oxoeicosanoyl-CoA. Residues 195–206 (PAYQKYLWWKKY) are Cytoplasmic-facing. Residues 207–227 (LTSLQLVQFVIVAIHISQFFF) traverse the membrane as a helical segment. Topologically, residues 228 to 236 (MEDCKYQFP) are lumenal. A helical membrane pass occupies residues 237–257 (VFACIIMSYSFMFLLLFLHFW). Over 258 to 281 (YRAYTKGQRLPKTVKNGTCKNKDN) the chain is Cytoplasmic. Arginine 266 contacts 3-oxoeicosanoyl-CoA. Positions 277 to 281 (KNKDN) match the Di-lysine motif motif.

The protein belongs to the ELO family. ELOVL7 subfamily. In terms of assembly, homodimer. Interacts with TECR. As to expression, expressed in most tissues except heart and skeletal muscle.

The protein resides in the endoplasmic reticulum membrane. The catalysed reaction is a very-long-chain acyl-CoA + malonyl-CoA + H(+) = a very-long-chain 3-oxoacyl-CoA + CO2 + CoA. The enzyme catalyses eicosanoyl-CoA + malonyl-CoA + H(+) = 3-oxodocosanoyl-CoA + CO2 + CoA. It catalyses the reaction (5Z,8Z,11Z,14Z)-eicosatetraenoyl-CoA + malonyl-CoA + H(+) = (7Z,10Z,13Z,16Z)-3-oxodocosatetraenoyl-CoA + CO2 + CoA. It carries out the reaction (6Z,9Z,12Z)-octadecatrienoyl-CoA + malonyl-CoA + H(+) = (8Z,11Z,14Z)-3-oxoeicosatrienoyl-CoA + CO2 + CoA. The catalysed reaction is (9Z,12Z)-octadecadienoyl-CoA + malonyl-CoA + H(+) = (11Z,14Z)-3-oxoicosa-11,14-dienoyl-CoA + CO2 + CoA. The enzyme catalyses (9Z)-octadecenoyl-CoA + malonyl-CoA + H(+) = 3-oxo-(11Z)-eicosenoyl-CoA + CO2 + CoA. It catalyses the reaction octadecanoyl-CoA + malonyl-CoA + H(+) = 3-oxoeicosanoyl-CoA + CO2 + CoA. It carries out the reaction hexadecanoyl-CoA + malonyl-CoA + H(+) = 3-oxooctadecanoyl-CoA + CO2 + CoA. The catalysed reaction is (9Z,12Z,15Z)-octadecatrienoyl-CoA + malonyl-CoA + H(+) = (11Z,14Z,17Z)-3-oxoeicosatrienoyl-CoA + CO2 + CoA. It functions in the pathway lipid metabolism; fatty acid biosynthesis. Its function is as follows. Catalyzes the first and rate-limiting reaction of the four reactions that constitute the long-chain fatty acids elongation cycle. This endoplasmic reticulum-bound enzymatic process allows the addition of 2 carbons to the chain of long- and very long-chain fatty acids (VLCFAs) per cycle. Condensing enzyme with higher activity toward C18 acyl-CoAs, especially C18:3(n-3) acyl-CoAs and C18:3(n-6)-CoAs. Also active toward C20:4-, C18:0-, C18:1-, C18:2- and C16:0-CoAs, and weakly toward C20:0-CoA. Little or no activity toward C22:0-, C24:0-, or C26:0-CoAs. May participate in the production of saturated and polyunsaturated VLCFAs of different chain lengths that are involved in multiple biological processes as precursors of membrane lipids and lipid mediators. This Homo sapiens (Human) protein is Very long chain fatty acid elongase 7.